The sequence spans 498 residues: Aminotransferase swnA (498 aa).

It belongs to the class-I pyridoxal-phosphate-dependent aminotransferase family. It depends on pyridoxal 5'-phosphate as a cofactor.

It functions in the pathway mycotoxin biosynthesis. Functionally, aminotransferase; part of the gene cluster that mediates the biosynthesis of swainsonine (SW), a cytotoxic fungal alkaloid and a potential cancer therapy drug. Swainsonine production occurs via a multibranched pathway and is dispensable for fungal colonization of plants and infection of insect hosts. The first step of swainsonine biosynthesis is the production of the precursor pipecolic acid (PA) via conversion of L-lysine (Lys) to 1-piperideine-6-carboxylate (P6C) by the aminotransferase swnA, the latter being further reduced to PA by the reductase swnR. PA can be converted from lysine by both the SW biosynthetic cluster and the unclustered genes such as lysine cyclodeaminase. The PKS-NRPS hybrid synthetase swnK uptakes and condensates PA and malonyl-CoA with and without skipping of the ketoreductase (KR) domain in order to produce 3 intermediates, 1-oxoindolizidine, (1S)-1-hydroxyindolizin, and (1R)-1-hydroxyindolizine; with the transisomer (1S)-1-hydroxyindolizin being predominant. The terminal thioester reductase (TE) domain of swnK is involved in reduction of the thioester bond to release the intermediate aldehydes. The oxidoreductase swnN could contribute to the reduction of 1-oxoindolizidine to (1S)-1-hydroxyindolizin and (1R)-1-hydroxyindolizine, contributing to the major route of SW production. The dioxygenase swnH2 would be responsible for the oxidization of (1R)-1-hydroxyindolizine into (1R,2S)-1,2-dihydroxyindolizine and of (1S)-1-hydroxyindolizin to yield both (1R,2S)-1,2-dihydroxyindolizine and (1S,2S)-1,2-dihydroxyindolizine. The dioxygenase swnH1 then performs the conversion of the 1,2-dihydroxyindolizine epimers to SW. This is Aminotransferase swnA from Metarhizium robertsii (strain ARSEF 23 / ATCC MYA-3075) (Metarhizium anisopliae (strain ARSEF 23)).